Consider the following 435-residue polypeptide: Methylenetetrahydrofolate--tRNA-(uracil-5-)-methyltransferase TrmFO (435 aa).

FAD is bound at residue 9–14; that stretch reads GAGLAG.

This sequence belongs to the MnmG family. TrmFO subfamily. Requires FAD as cofactor.

The protein localises to the cytoplasm. It carries out the reaction uridine(54) in tRNA + (6R)-5,10-methylene-5,6,7,8-tetrahydrofolate + NADH + H(+) = 5-methyluridine(54) in tRNA + (6S)-5,6,7,8-tetrahydrofolate + NAD(+). The enzyme catalyses uridine(54) in tRNA + (6R)-5,10-methylene-5,6,7,8-tetrahydrofolate + NADPH + H(+) = 5-methyluridine(54) in tRNA + (6S)-5,6,7,8-tetrahydrofolate + NADP(+). In terms of biological role, catalyzes the folate-dependent formation of 5-methyl-uridine at position 54 (M-5-U54) in all tRNAs. The protein is Methylenetetrahydrofolate--tRNA-(uracil-5-)-methyltransferase TrmFO of Staphylococcus epidermidis (strain ATCC 35984 / DSM 28319 / BCRC 17069 / CCUG 31568 / BM 3577 / RP62A).